We begin with the raw amino-acid sequence, 88 residues long: Small ribosomal subunit protein uS15c (88 aa).

The protein belongs to the universal ribosomal protein uS15 family. In terms of assembly, part of the 30S ribosomal subunit.

The protein resides in the plastid. It localises to the chloroplast. The polypeptide is Small ribosomal subunit protein uS15c (rps15) (Physcomitrium patens (Spreading-leaved earth moss)).